The following is a 557-amino-acid chain: Probable WRKY transcription factor 20 (557 aa).

Residues 1-12 (MNPQANDRKEFQ) show a composition bias toward basic and acidic residues. Disordered regions lie at residues 1–36 (MNPQ…GGGA) and 76–215 (KPEP…DGYN). The segment covering 95–114 (SASSSSYTGRGFHQNTFTEQ) has biased composition (polar residues). Residues 151–169 (SSHSPSSISDAAGSSSELS) show a composition bias toward low complexity. Positions 193–207 (SIQTSQNDSRGSTPS) are enriched in polar residues. The segment at residues 205–269 (TPSILADDGY…YKGTHDHPKP (65 aa)) is a DNA-binding region (WRKY 1). Positions 236, 241, 264, and 266 each coordinate Zn(2+). The interval 257–348 (DIIYKGTHDH…PDDDDPFSKR (92 aa)) is disordered. Residues 282–299 (QEERLDKYPSSTGRDEKG) show a composition bias toward basic and acidic residues. Positions 303-314 (YNLSNPNEQTGN) are enriched in polar residues. A compositionally biased stretch (low complexity) spans 321-332 (SASDDGGEAAAS). Residues 375-440 (SEVDILDDGY…YEGKHDHDVP (66 aa)) constitute a DNA-binding region (WRKY 2). Zn(2+)-binding residues include C406, C411, H435, and H437. 2 disordered regions span residues 433-486 (GKHD…QHQN) and 520-557 (NQYG…QSGP). Residues 520 to 536 (NQYGQRETKNETQNGDI) are compositionally biased toward polar residues.

This sequence belongs to the WRKY group I family.

Its subcellular location is the nucleus. In terms of biological role, transcription factor. Interacts specifically with the W box (5'-(T)TGAC[CT]-3'), a frequently occurring elicitor-responsive cis-acting element. The polypeptide is Probable WRKY transcription factor 20 (WRKY20) (Arabidopsis thaliana (Mouse-ear cress)).